Consider the following 649-residue polypeptide: Threonine--tRNA ligase (649 aa).

The TGS domain occupies 1–60 (MHVTLPDGKQLDLQPGATALDAAKAIGPRLAQDALGATANGELTDLMTPLSDGASITLIT). The tract at residues 248–544 (DHRKLGKELE…LIEHYAGDFP (297 aa)) is catalytic. The Zn(2+) site is built by Cys341, His392, and His521.

It belongs to the class-II aminoacyl-tRNA synthetase family. In terms of assembly, homodimer. The cofactor is Zn(2+).

The protein localises to the cytoplasm. The enzyme catalyses tRNA(Thr) + L-threonine + ATP = L-threonyl-tRNA(Thr) + AMP + diphosphate + H(+). In terms of biological role, catalyzes the attachment of threonine to tRNA(Thr) in a two-step reaction: L-threonine is first activated by ATP to form Thr-AMP and then transferred to the acceptor end of tRNA(Thr). Also edits incorrectly charged L-seryl-tRNA(Thr). The sequence is that of Threonine--tRNA ligase from Deinococcus radiodurans (strain ATCC 13939 / DSM 20539 / JCM 16871 / CCUG 27074 / LMG 4051 / NBRC 15346 / NCIMB 9279 / VKM B-1422 / R1).